The primary structure comprises 381 residues: uncharacterized protein (381 aa).

The chain crosses the membrane as a helical span at residues 3 to 23; that stretch reads GAVAGLVFLAVLVIFAIIVVA.

Belongs to the band 7/mec-2 family.

The protein localises to the membrane. This is an uncharacterized protein from Mycobacterium bovis (strain ATCC BAA-935 / AF2122/97).